The primary structure comprises 217 residues: Large ribosomal subunit protein uL3 (217 aa).

Belongs to the universal ribosomal protein uL3 family. As to quaternary structure, part of the 50S ribosomal subunit. Forms a cluster with proteins L14 and L19.

Functionally, one of the primary rRNA binding proteins, it binds directly near the 3'-end of the 23S rRNA, where it nucleates assembly of the 50S subunit. In Mycobacterium sp. (strain KMS), this protein is Large ribosomal subunit protein uL3.